The following is a 126-amino-acid chain: uncharacterized protein (126 aa).

This is an uncharacterized protein from Saccharomyces cerevisiae (strain ATCC 204508 / S288c) (Baker's yeast).